Consider the following 134-residue polypeptide: Probable salivary secreted peptide (134 aa).

Positions 1–24 (MGAQKTIAYLAIIAIAVIFAQVNT) are cleaved as a signal peptide.

The protein resides in the secreted. The polypeptide is Probable salivary secreted peptide (Bombus ignitus (Bumblebee)).